A 777-amino-acid chain; its full sequence is Rho-GTPase-activating protein 8 (777 aa).

Residues 3–420 (SSFSNGFWSK…YQEIIQPESD (418 aa)) form the F-BAR domain. The stretch at 117-172 (QKLQTSQQVLTNQIKSYEKKYYTLKKTKSAYYNKCRNLEDYEEESKESNETTSEAI) forms a coiled coil. Residues 213–296 (VLQEIPLQDY…WKDKAFQFAG (84 aa)) enclose the DEP domain. A Rho-GAP domain is found at 454–650 (VDVEFLSHRD…DLLTYGPSIF (197 aa)). Residues 667–709 (LYQSSATPRSTDVSPTRPDSISSVRSHTAVESPRSSFEELQPS) are disordered. Residues 668–692 (YQSSATPRSTDVSPTRPDSISSVRS) are compositionally biased toward polar residues. A phosphoserine mark is found at Ser676 and Ser680. Thr682 is subject to Phosphothreonine. Phosphoserine is present on Ser686. Thr694 bears the Phosphothreonine mark. Ser698 is subject to Phosphoserine.

In terms of assembly, interacts with pak1/shk1. Phosphorylated by pak1/shk1.

The protein resides in the cytoplasm. In terms of biological role, acts in signal transduction. Negatively regulates the pak1/shk1 control pathway. This Schizosaccharomyces pombe (strain 972 / ATCC 24843) (Fission yeast) protein is Rho-GTPase-activating protein 8 (rga8).